A 254-amino-acid polypeptide reads, in one-letter code: Probable transcriptional regulator ycf27 (254 aa).

In terms of domain architecture, Response regulatory spans 16–129; that stretch reads KVLIVDDEAS…ELEARIRAVL (114 aa). Asp-65 is subject to 4-aspartylphosphate. A DNA-binding region (H-T-H motif) is located at residues 85-103; that stretch reads DVPIIMLTALGDVADRITG. Positions 144 to 245 form a DNA-binding region, ompR/PhoB-type; that stretch reads SGIINFNFLT…ARGTGYLFQR (102 aa).

It localises to the plastid. The protein localises to the chloroplast. In terms of biological role, probable promoter-specific protein mediating the interaction between DNA and RNA polymerase. This chain is Probable transcriptional regulator ycf27 (ycf27), found in Guillardia theta (Cryptophyte).